We begin with the raw amino-acid sequence, 204 residues long: Probable UMP-CMP kinase 1 (204 aa).

31–36 (GSGKGT) provides a ligand contact to ATP. Residues 51–80 (SAGDLLRAEIKSGSEFGAMIQSMIAEGRIV) are NMP. A ribonucleoside 5'-phosphate-binding positions include R57, 78–80 (RIV), and 105–108 (GFPR). N112 lines the CMP pocket. An LID region spans residues 143–151 (SRNQGREDD). Residue R144 coordinates ATP. Residues R148 and R159 each coordinate a ribonucleoside 5'-phosphate. K187 contributes to the ATP binding site.

Belongs to the adenylate kinase family. UMP-CMP kinase subfamily. Monomer. Mg(2+) serves as cofactor.

It localises to the cytoplasm. The protein resides in the nucleus. It catalyses the reaction CMP + ATP = CDP + ADP. The catalysed reaction is dCMP + ATP = dCDP + ADP. The enzyme catalyses UMP + ATP = UDP + ADP. Its function is as follows. Catalyzes the phosphorylation of pyrimidine nucleoside monophosphates at the expense of ATP. Plays an important role in de novo pyrimidine nucleotide biosynthesis. Has preference for UMP and CMP as phosphate acceptors. This is Probable UMP-CMP kinase 1 (UMK1) from Arabidopsis thaliana (Mouse-ear cress).